A 571-amino-acid chain; its full sequence is OTU domain-containing protein 5 (571 aa).

2 disordered regions span residues 1–111 (MTIL…GPGG) and 146–175 (PGHS…GAGY). The span at 11 to 30 (PPDADPANEPPPPGPMPPAP) shows a compositional bias: pro residues. Gly residues predominate over residues 32 to 47 (RGGGVGVGGGGTGVGG). Positions 63 to 75 (ASPPPQGPLPGPP) are enriched in pro residues. A Phosphoserine modification is found at serine 64. The span at 84–97 (AVPPGAVAGPRPQQ) shows a compositional bias: low complexity. Residue serine 165 is modified to Phosphoserine. The residue at position 175 (tyrosine 175) is a Phosphotyrosine. The residue at position 177 (serine 177) is a Phosphoserine. Threonine 195 is modified (phosphothreonine). Residues 213 to 341 (FIIKQMKEDG…NIHYNSVVNP (129 aa)) form the OTU domain. The tract at residues 218 to 224 (MKEDGAC) is cys-loop. Aspartate 221 is a catalytic residue. Cysteine 224 acts as the Nucleophile in catalysis. The interval 273–283 (KRKNNCHGNHI) is variable-loop. The residue at position 328 (serine 328) is a Phosphoserine; by MTOR. Residues 329–334 (YHRNIH) are his-loop. Histidine 334 is an active-site residue. Serine 337 and serine 375 each carry phosphoserine. A disordered region spans residues 418–502 (ARQVRGPSQP…PGTSSQFSAG (85 aa)). Composition is skewed to low complexity over residues 430-443 (ASAT…AASS) and 450-462 (SRSP…ASSP). Residue serine 452 is modified to Phosphoserine. Position 507 is a phosphothreonine (threonine 507). Serine 508 carries the post-translational modification Phosphoserine; by MTOR.

This sequence belongs to the peptidase C85 family. As to quaternary structure, interacts with TRAF3. Phosphorylation at Ser-177 is required for deubiquitinating activity. Phosphorylation at Ser-328, Ser-337 and Ser-508 by MTOR promotes its activity. As to expression, expressed in various tissues, including the liver and placenta, as well as in peripheral blood leukocytes.

The protein localises to the nucleus. It carries out the reaction Thiol-dependent hydrolysis of ester, thioester, amide, peptide and isopeptide bonds formed by the C-terminal Gly of ubiquitin (a 76-residue protein attached to proteins as an intracellular targeting signal).. With respect to regulation, inhibited by N-ethyl-maleimide (NEM). In terms of biological role, deubiquitinating enzyme that functions as a negative regulator of the innate immune system. Has peptidase activity towards 'Lys-48'- and 'Lys-63'-linked polyubiquitin chains. Can also cleave 'Lys-11'-linked ubiquitin chains (in vitro). Acts via TRAF3 deubiquitination and subsequent suppression of type I interferon (IFN) production. Controls neuroectodermal differentiation through cleaving 'Lys-48'-linked ubiquitin chains to counteract degradation of select chromatin regulators such as ARID1A, HDAC2 and HCF1. Acts as a positive regulator of mTORC1 and mTORC2 signaling following phosphorylation by MTOR: acts by mediating deubiquitination of BTRC, leading to its stability. This Homo sapiens (Human) protein is OTU domain-containing protein 5.